The sequence spans 352 residues: Nicotinate-nucleotide--dimethylbenzimidazole phosphoribosyltransferase (352 aa).

E318 functions as the Proton acceptor in the catalytic mechanism.

This sequence belongs to the CobT family.

The catalysed reaction is 5,6-dimethylbenzimidazole + nicotinate beta-D-ribonucleotide = alpha-ribazole 5'-phosphate + nicotinate + H(+). It participates in nucleoside biosynthesis; alpha-ribazole biosynthesis; alpha-ribazole from 5,6-dimethylbenzimidazole: step 1/2. Its function is as follows. Catalyzes the synthesis of alpha-ribazole-5'-phosphate from nicotinate mononucleotide (NAMN) and 5,6-dimethylbenzimidazole (DMB). This Dehalococcoides mccartyi (strain ATCC BAA-2100 / JCM 16839 / KCTC 5957 / BAV1) protein is Nicotinate-nucleotide--dimethylbenzimidazole phosphoribosyltransferase.